The sequence spans 2662 residues: Centrosome-associated protein CEP250L1 (2662 aa).

2 coiled-coil regions span residues 1030–1248 (KVHY…EEEE) and 1281–1719 (ARTH…IDAQ).

The protein resides in the cytoplasm. It is found in the cytoskeleton. Its subcellular location is the microtubule organizing center. The protein localises to the centrosome. Part of the centrosome inner core complex. Plays a role in the formation and/or stabilization of the mitotic spindle. Required for proper nuclear segregation and DNA partitioning during cell division. This is Centrosome-associated protein CEP250L1 from Toxoplasma gondii (strain ATCC 50611 / Me49).